A 124-amino-acid chain; its full sequence is Small ribosomal subunit protein uS12cy (124 aa).

Belongs to the universal ribosomal protein uS12 family. Part of the 30S ribosomal subunit.

The protein resides in the plastid. Its subcellular location is the chloroplast. Its function is as follows. With S4 and S5 plays an important role in translational accuracy. Located at the interface of the 30S and 50S subunits. This is Small ribosomal subunit protein uS12cy (rps12-B) from Olimarabidopsis pumila (Dwarf rocket).